Reading from the N-terminus, the 527-residue chain is Catalase (527 aa).

A compositionally biased stretch (basic and acidic residues) spans 1–22 (MADSRDPASDQMKLWKEQRAAQ). The tract at residues 1 to 34 (MADSRDPASDQMKLWKEQRAAQKPDVLTTGGGNP) is disordered. The residue at position 2 (A2) is an N-acetylalanine. Residue S9 is modified to Phosphoserine. Residue K13 is modified to N6-succinyllysine. Residues H75 and N148 contribute to the active site. NADP(+) contacts are provided by H194, S201, R203, and N213. At K221 the chain carries N6-succinyllysine. Position 233 is an N6-acetyllysine (K233). The NADP(+) site is built by K237, W303, and H305. Residue Y358 participates in heme binding. Phosphoserine occurs at positions 422 and 434. K449 and K480 each carry N6-acetyllysine; alternate. K449 and K480 each carry N6-succinyllysine; alternate. K499 is subject to N6-acetyllysine. The residue at position 511 (T511) is a Phosphothreonine. Position 517 is a phosphoserine (S517). Residues 524–527 (KANL) carry the Microbody targeting signal; atypical motif.

This sequence belongs to the catalase family. Homotetramer. Interacts (via microbody targeting signal) with PEX5, monomeric form interacts with PEX5, leading to its translocation into peroxisomes. Heme is required as a cofactor. It depends on NADP(+) as a cofactor.

It is found in the peroxisome matrix. It carries out the reaction 2 H2O2 = O2 + 2 H2O. Functionally, catalyzes the degradation of hydrogen peroxide (H(2)O(2)) generated by peroxisomal oxidases to water and oxygen, thereby protecting cells from the toxic effects of hydrogen peroxide. Promotes growth of cells including T-cells, B-cells, myeloid leukemia cells, melanoma cells, mastocytoma cells and normal and transformed fibroblast cells. The chain is Catalase (CAT) from Canis lupus familiaris (Dog).